We begin with the raw amino-acid sequence, 230 residues long: 7-cyano-7-deazaguanine synthase (230 aa).

An ATP-binding site is contributed by 10-20; it reads LSGGLDSATTA. The Zn(2+) site is built by C191, C199, C202, and C205.

Belongs to the QueC family. Zn(2+) is required as a cofactor.

The enzyme catalyses 7-carboxy-7-deazaguanine + NH4(+) + ATP = 7-cyano-7-deazaguanine + ADP + phosphate + H2O + H(+). It functions in the pathway purine metabolism; 7-cyano-7-deazaguanine biosynthesis. Catalyzes the ATP-dependent conversion of 7-carboxy-7-deazaguanine (CDG) to 7-cyano-7-deazaguanine (preQ(0)). The sequence is that of 7-cyano-7-deazaguanine synthase from Gloeothece citriformis (strain PCC 7424) (Cyanothece sp. (strain PCC 7424)).